Consider the following 408-residue polypeptide: Protein SLX4IP (408 aa).

Residues Lys-61 and Lys-79 each participate in a glycyl lysine isopeptide (Lys-Gly) (interchain with G-Cter in SUMO2) cross-link. A Phosphoserine modification is found at Ser-130. Glycyl lysine isopeptide (Lys-Gly) (interchain with G-Cter in SUMO2) cross-links involve residues Lys-167 and Lys-176. The disordered stretch occupies residues 173 to 226 (TETKSSVTSKSQTRRDTVETSSDSVIAEIARRRNDGQASSSPPSESMGQAKDSI). A compositionally biased stretch (polar residues) spans 208–219 (GQASSSPPSESM). Ser-213 carries the phosphoserine modification. Residues Lys-239 and Lys-242 each participate in a glycyl lysine isopeptide (Lys-Gly) (interchain with G-Cter in SUMO2) cross-link. The span at 243–255 (VNQTQPEDTSGQQ) shows a compositional bias: polar residues. Residues 243–313 (VNQTQPEDTS…DFDHHGRVSL (71 aa)) form a disordered region. Glycyl lysine isopeptide (Lys-Gly) (interchain with G-Cter in SUMO2) cross-links involve residues Lys-256, Lys-291, Lys-347, Lys-356, and Lys-372. Residues 365 to 408 (LSSRHLMKNNPGQAQQTGLATNTERLSTIQNSPTKKRKKYERGH) are disordered. The segment covering 374–397 (NPGQAQQTGLATNTERLSTIQNSP) has biased composition (polar residues). At Thr-392 the chain carries Phosphothreonine. A compositionally biased stretch (basic residues) spans 398–408 (TKKRKKYERGH). A Glycyl lysine isopeptide (Lys-Gly) (interchain with G-Cter in SUMO2) cross-link involves residue Lys-399.

It belongs to the SLX4IP family. As to quaternary structure, interacts with SLX4/BTBD12; subunit of different structure-specific endonucleases.

This chain is Protein SLX4IP (SLX4IP), found in Homo sapiens (Human).